The chain runs to 394 residues: Phosphoglycerate kinase (394 aa).

Residues D21–N23, R36, H59–R62, R118, and R151 contribute to the substrate site. Residues K202, G293, E324, and G350–S353 each bind ATP.

This sequence belongs to the phosphoglycerate kinase family. As to quaternary structure, monomer.

Its subcellular location is the cytoplasm. The catalysed reaction is (2R)-3-phosphoglycerate + ATP = (2R)-3-phospho-glyceroyl phosphate + ADP. Its pathway is carbohydrate degradation; glycolysis; pyruvate from D-glyceraldehyde 3-phosphate: step 2/5. The protein is Phosphoglycerate kinase of Exiguobacterium sp. (strain ATCC BAA-1283 / AT1b).